Reading from the N-terminus, the 311-residue chain is Ribosomal RNA small subunit methyltransferase H (311 aa).

Residues 34–36, aspartate 54, phenylalanine 78, aspartate 100, and glutamine 107 contribute to the S-adenosyl-L-methionine site; that span reads GGH.

The protein belongs to the methyltransferase superfamily. RsmH family.

It localises to the cytoplasm. The enzyme catalyses cytidine(1402) in 16S rRNA + S-adenosyl-L-methionine = N(4)-methylcytidine(1402) in 16S rRNA + S-adenosyl-L-homocysteine + H(+). In terms of biological role, specifically methylates the N4 position of cytidine in position 1402 (C1402) of 16S rRNA. This Hamiltonella defensa subsp. Acyrthosiphon pisum (strain 5AT) protein is Ribosomal RNA small subunit methyltransferase H.